We begin with the raw amino-acid sequence, 919 residues long: uncharacterized protein (919 aa).

Residues 1–15 (MEALILLSSQQSGSI) show a composition bias toward low complexity. Disordered regions lie at residues 1 to 167 (MEAL…DLEN), 179 to 312 (RFKP…STPS), 415 to 491 (HIYE…RLSL), 553 to 739 (QQQQ…TIKP), 751 to 863 (THNE…NNII), and 883 to 906 (LNIN…DHIN). Over residues 16–25 (KNNCASTSDI) the composition is skewed to polar residues. Low complexity-rich tracts occupy residues 34-75 (IVIV…SSSS), 96-107 (SSPSSSPNTPKT), and 141-153 (TPTT…TPIK). A compositionally biased stretch (basic and acidic residues) spans 154-167 (PVKDPKEKEKDLEN). Positions 186-292 (NNTNNNNNIN…QQSSPTSSQT (107 aa)) are enriched in low complexity. Polar residues predominate over residues 420-433 (PNENNNGGSFQKPN). Low complexity-rich tracts occupy residues 450-471 (GVSG…PSHP), 553-564 (QQQQQQQQQSSS), 573-589 (SQPQ…QTPQ), and 618-635 (HMPQ…MPHS). A compositionally biased stretch (polar residues) spans 678–695 (YGSSPNLNGGKGSNNFLQ). Positions 712–723 (SSVDSYSNSSPT) are enriched in low complexity. Positions 754–768 (ENYMSSPRQPLSPHN) are enriched in polar residues. Basic and acidic residues predominate over residues 785–797 (PHEHCNYIDKNDE). The span at 798-863 (YYSNNNNNNN…NNNNNNNNII (66 aa)) shows a compositional bias: low complexity. Over residues 883-899 (LNINHQDGPNSASSTPR) the composition is skewed to polar residues.

This is an uncharacterized protein from Dictyostelium discoideum (Social amoeba).